A 102-amino-acid chain; its full sequence is Small ribosomal subunit protein uS10 (102 aa).

It belongs to the universal ribosomal protein uS10 family. In terms of assembly, part of the 30S ribosomal subunit.

Involved in the binding of tRNA to the ribosomes. In Akkermansia muciniphila (strain ATCC BAA-835 / DSM 22959 / JCM 33894 / BCRC 81048 / CCUG 64013 / CIP 107961 / Muc), this protein is Small ribosomal subunit protein uS10.